We begin with the raw amino-acid sequence, 262 residues long: Putative glutamine--fructose-6-phosphate aminotransferase [isomerizing] (262 aa).

The Nucleophile; for GATase activity role is filled by Cys2. The region spanning 2 to 262 is the Glutamine amidotransferase type-2 domain; sequence CGIFGYCNFL…RKSPPFVHNT (261 aa).

The enzyme catalyses D-fructose 6-phosphate + L-glutamine = D-glucosamine 6-phosphate + L-glutamate. Its pathway is nucleotide-sugar biosynthesis; UDP-N-acetyl-alpha-D-glucosamine biosynthesis; alpha-D-glucosamine 6-phosphate from D-fructose 6-phosphate: step 1/1. Functionally, involved in amino sugar synthesis (formation of chitin, supplies the amino sugars of asparagine-linked oligosaccharides of glycoproteins). This Saccharomyces cerevisiae (strain ATCC 204508 / S288c) (Baker's yeast) protein is Putative glutamine--fructose-6-phosphate aminotransferase [isomerizing].